The chain runs to 515 residues: Endoglucanase 23 (515 aa).

The N-terminal stretch at 1-29 is a signal peptide; it reads MALLSAPVRRRRSRVRVLLVCCCLLLALA. Asp95 serves as the catalytic Nucleophile. Asn178, Asn375, and Asn384 each carry an N-linked (GlcNAc...) asparagine glycan. His426 is an active-site residue. An N-linked (GlcNAc...) asparagine glycan is attached at Asn452. Catalysis depends on residues Asp477 and Glu486.

This sequence belongs to the glycosyl hydrolase 9 (cellulase E) family.

Its subcellular location is the secreted. The enzyme catalyses Endohydrolysis of (1-&gt;4)-beta-D-glucosidic linkages in cellulose, lichenin and cereal beta-D-glucans.. In Oryza sativa subsp. japonica (Rice), this protein is Endoglucanase 23 (GLU12).